The following is a 159-amino-acid chain: Ribosomal RNA large subunit methyltransferase H (159 aa).

S-adenosyl-L-methionine is bound by residues Leu-76, Gly-108, and 127–132 (FGRLTY).

Belongs to the RNA methyltransferase RlmH family. Homodimer.

The protein resides in the cytoplasm. The enzyme catalyses pseudouridine(1915) in 23S rRNA + S-adenosyl-L-methionine = N(3)-methylpseudouridine(1915) in 23S rRNA + S-adenosyl-L-homocysteine + H(+). Its function is as follows. Specifically methylates the pseudouridine at position 1915 (m3Psi1915) in 23S rRNA. This Enterococcus faecalis (strain ATCC 700802 / V583) protein is Ribosomal RNA large subunit methyltransferase H.